The chain runs to 1210 residues: Multimerin-1 (1210 aa).

An N-terminal signal peptide occupies residues 1 to 19 (MLGLKFLVLLSILWGRVFR). The interval 57–102 (ATQNPSTQGPAAAERSSEDDVLLQSTSQPSETSTPPEGRHQTPLEK) is disordered. Over residues 80–92 (QSTSQPSETSTPP) the composition is skewed to low complexity. N-linked (GlcNAc...) asparagine glycosylation is present at N133. The segment covering 143-155 (SRKSDQQEVSTKS) has biased composition (polar residues). Positions 143–190 (SRKSDQQEVSTKSAGDMGNRSARETHLRRSDNSRNQRPSYQKPSFETT) are disordered. N161 is a glycosylation site (N-linked (GlcNAc...) asparagine). A compositionally biased stretch (basic and acidic residues) spans 163 to 176 (SARETHLRRSDNSR). Over residues 177-189 (NQRPSYQKPSFET) the composition is skewed to polar residues. The region spanning 192-267 (GKNWCAHVHT…PGYIGPNCQL (76 aa)) is the EMI domain. 3 cysteine pairs are disulfide-bonded: C196–C257, C222–C230, and C256–C265. T201 is a glycosylation site (O-linked (Fuc) threonine). A glycan (O-linked (Fuc) threonine) is linked at T250. Residues 276–299 (AHSNQAESHTAVDQGRAQQQKQDC) form a disordered region. A coiled-coil region spans residues 303-338 (AMIQKLAEQLSQQERKLSLLQKKVDNASLVADDMRN). N328, N415, N491, N525, N560, N602, N712, N765, N810, N822, N903, N915, N963, and N1000 each carry an N-linked (GlcNAc...) asparagine glycan. Positions 564-690 (LLEMEKESAR…RHNLLRNEVQ (127 aa)) form a coiled coil. Residues 809 to 846 (FNETTSQVNKCQQNMSHLEENMLSVTKTAKEFETRLQG) are a coiled coil. The EGF-like domain maps to 1023–1059 (EHSSCSSFPCQNGGTCISGRSNFICACRHPFMGDTCT). 3 disulfide bridges follow: C1027/C1038, C1032/C1047, and C1049/C1058. Residue T1037 is glycosylated (O-linked (Fuc) threonine). Positions 1078–1210 (RYAPMVAFFV…TFSGYLLYRT (133 aa)) constitute a C1q domain.

As to quaternary structure, multimeric. Composed of varying sized, disulfide-linked multimers, the smallest of which is a homotrimer. Proteolysis of the promultimerin in the N-terminal region, leads to the mature p155 form that is stored in platelets. Interacts with factor V/Va. In terms of processing, extensively N-glycosylated. Post-translationally, O-fucosylated within the EMI domain (at Thr-201 and Thr-250) by FUT10/POFUT3 and FUT11/POFUT4. O-fucosylation at Thr-201 and Thr-1037 are required for facilitating protein folding and secretion.

It is found in the secreted. In terms of biological role, carrier protein for platelet (but not plasma) factor V/Va. Plays a role in the storage and stabilization of factor V in platelets. Upon release following platelet activation, may limit platelet and plasma factor Va-dependent thrombin generation. Ligand for integrin alpha-IIb/beta-3 and integrin alpha-V/beta-3 on activated platelets, and may function as an extracellular matrix or adhesive protein. The sequence is that of Multimerin-1 from Mus musculus (Mouse).